The sequence spans 273 residues: Dermonecrotic toxin LhSicTox-alphaIA1i (273 aa).

Residue His5 is part of the active site. Mg(2+) is bound by residues Glu25 and Asp27. The Nucleophile role is filled by His41. Intrachain disulfides connect Cys45–Cys51 and Cys47–Cys190. Residue Asp85 participates in Mg(2+) binding.

The protein belongs to the arthropod phospholipase D family. Class II subfamily. Mg(2+) is required as a cofactor. Expressed by the venom gland.

It is found in the secreted. The enzyme catalyses an N-(acyl)-sphingosylphosphocholine = an N-(acyl)-sphingosyl-1,3-cyclic phosphate + choline. It catalyses the reaction an N-(acyl)-sphingosylphosphoethanolamine = an N-(acyl)-sphingosyl-1,3-cyclic phosphate + ethanolamine. The catalysed reaction is a 1-acyl-sn-glycero-3-phosphocholine = a 1-acyl-sn-glycero-2,3-cyclic phosphate + choline. It carries out the reaction a 1-acyl-sn-glycero-3-phosphoethanolamine = a 1-acyl-sn-glycero-2,3-cyclic phosphate + ethanolamine. In terms of biological role, dermonecrotic toxins cleave the phosphodiester linkage between the phosphate and headgroup of certain phospholipids (sphingolipid and lysolipid substrates), forming an alcohol (often choline) and a cyclic phosphate. This toxin acts on sphingomyelin (SM). It may also act on ceramide phosphoethanolamine (CPE), lysophosphatidylcholine (LPC) and lysophosphatidylethanolamine (LPE), but not on lysophosphatidylserine (LPS), and lysophosphatidylglycerol (LPG). It acts by transphosphatidylation, releasing exclusively cyclic phosphate products as second products. Induces dermonecrosis, hemolysis, increased vascular permeability, edema, inflammatory response, and platelet aggregation. The polypeptide is Dermonecrotic toxin LhSicTox-alphaIA1i (Loxosceles hirsuta (Recluse spider)).